The primary structure comprises 707 residues: Leucine-rich repeat neuronal protein 3 (707 aa).

Residues 1-22 form the signal peptide; that stretch reads MKDTPLQVHVLLGLAITTLVQA. The 47-residue stretch at 23–69 folds into the LRRNT domain; sequence IDKKVDCPQLCTCEIRPWFTPRSIYMEASTVDCNDLGLLNFPARLPA. At 23–626 the chain is on the extracellular side; sequence IDKKVDCPQL…DGKEYGKNHT (604 aa). 12 LRR repeats span residues 70–91, 93–114, 117–138, 141–162, 165–186, 189–210, 213–234, 237–258, 261–282, 285–304, 310–332, and 335–358; these read DTQI…TDFP, NLTG…NVQK, QLLS…CLYG, NLQE…AFIG, NLLR…WFDA, NLEI…NFQP, KLRS…ALAG, NLES…ALQK, NLKF…DFSN, HLKE…DSLA, DLRK…AFFR, and KLES…ESLP. 2 N-linked (GlcNAc...) asparagine glycosylation sites follow: N93 and N103. A glycan (N-linked (GlcNAc...) asparagine) is linked at N223. The region spanning 368 to 421 is the LRRCT domain; sequence NPIRCDCVIRWINMNKTNIRFMEPDSLFCVDPPEFQGQNVRQVHFRDMMEICLP. N-linked (GlcNAc...) asparagine glycosylation occurs at N382. The region spanning 421 to 514 is the Ig-like C2-type domain; sequence PLIAPESFPS…DLKSIMIKVG (94 aa). A disulfide bridge links C444 with C496. N522, N579, N608, and N624 each carry an N-linked (GlcNAc...) asparagine glycan. The 92-residue stretch at 523–614 folds into the Fibronectin type-III domain; the sequence is GSLNIKIRDI…QCVNVTTKSL (92 aa). Residues 627–647 form a helical membrane-spanning segment; sequence VFVACVGGLLGIIGVMCLFSC. Residues 648–707 are Cytoplasmic-facing; it reads VSQEGSSEGEHSYAVNHCHKPALAFSELYPPLINLWESSKEKRATLEVKATAIGVPTNMS.

Expressed in the brain, in Stronger expression in the ventricular zone and anlage of thalamus, spinal cord, and dorsal root ganglion in 11-17 dpc cerebellum and cerebral cortex in adults.

The protein resides in the membrane. This Mus musculus (Mouse) protein is Leucine-rich repeat neuronal protein 3 (Lrrn3).